We begin with the raw amino-acid sequence, 519 residues long: 2-isopropylmalate synthase (519 aa).

In terms of domain architecture, Pyruvate carboxyltransferase spans 12–274; the sequence is VVIFDTTLRD…WCNVESTTLT (263 aa). Mn(2+) is bound by residues D21, H209, H211, and N245. The segment at 398-519 is regulatory domain; it reads RLVSLTVIAG…QREAPVAAAS (122 aa).

The protein belongs to the alpha-IPM synthase/homocitrate synthase family. LeuA type 1 subfamily. In terms of assembly, homodimer. Mn(2+) serves as cofactor.

The protein localises to the cytoplasm. The catalysed reaction is 3-methyl-2-oxobutanoate + acetyl-CoA + H2O = (2S)-2-isopropylmalate + CoA + H(+). It participates in amino-acid biosynthesis; L-leucine biosynthesis; L-leucine from 3-methyl-2-oxobutanoate: step 1/4. In terms of biological role, catalyzes the condensation of the acetyl group of acetyl-CoA with 3-methyl-2-oxobutanoate (2-ketoisovalerate) to form 3-carboxy-3-hydroxy-4-methylpentanoate (2-isopropylmalate). This is 2-isopropylmalate synthase from Afipia carboxidovorans (strain ATCC 49405 / DSM 1227 / KCTC 32145 / OM5) (Oligotropha carboxidovorans).